The primary structure comprises 184 residues: ATP synthase subunit b, chloroplastic (184 aa).

Residues leucine 27–leucine 49 traverse the membrane as a helical segment.

It belongs to the ATPase B chain family. As to quaternary structure, F-type ATPases have 2 components, F(1) - the catalytic core - and F(0) - the membrane proton channel. F(1) has five subunits: alpha(3), beta(3), gamma(1), delta(1), epsilon(1). F(0) has four main subunits: a(1), b(1), b'(1) and c(10-14). The alpha and beta chains form an alternating ring which encloses part of the gamma chain. F(1) is attached to F(0) by a central stalk formed by the gamma and epsilon chains, while a peripheral stalk is formed by the delta, b and b' chains.

The protein resides in the plastid. It localises to the chloroplast thylakoid membrane. Its function is as follows. F(1)F(0) ATP synthase produces ATP from ADP in the presence of a proton or sodium gradient. F-type ATPases consist of two structural domains, F(1) containing the extramembraneous catalytic core and F(0) containing the membrane proton channel, linked together by a central stalk and a peripheral stalk. During catalysis, ATP synthesis in the catalytic domain of F(1) is coupled via a rotary mechanism of the central stalk subunits to proton translocation. In terms of biological role, component of the F(0) channel, it forms part of the peripheral stalk, linking F(1) to F(0). This Cuscuta exaltata (Tall dodder) protein is ATP synthase subunit b, chloroplastic.